The chain runs to 44 residues: MTTLLLAKLPEAYAPFDPIVDVLPVIPLLFLLLAFVWQASVSFR.

The propeptide occupies Met-1 to Ala-7. Residues Ile-19 to Ala-39 traverse the membrane as a helical segment.

This sequence belongs to the PsbK family. PSII is composed of 1 copy each of membrane proteins PsbA, PsbB, PsbC, PsbD, PsbE, PsbF, PsbH, PsbI, PsbJ, PsbK, PsbL, PsbM, PsbT, PsbX, PsbY, PsbZ, Psb30/Ycf12, at least 3 peripheral proteins of the oxygen-evolving complex and a large number of cofactors. It forms dimeric complexes.

Its subcellular location is the plastid. The protein localises to the chloroplast thylakoid membrane. One of the components of the core complex of photosystem II (PSII). PSII is a light-driven water:plastoquinone oxidoreductase that uses light energy to abstract electrons from H(2)O, generating O(2) and a proton gradient subsequently used for ATP formation. It consists of a core antenna complex that captures photons, and an electron transfer chain that converts photonic excitation into a charge separation. The protein is Photosystem II reaction center protein K of Tupiella akineta (Green alga).